The sequence spans 205 residues: ATP phosphoribosyltransferase (205 aa).

This sequence belongs to the ATP phosphoribosyltransferase family. Short subfamily. In terms of assembly, heteromultimer composed of HisG and HisZ subunits.

It is found in the cytoplasm. The catalysed reaction is 1-(5-phospho-beta-D-ribosyl)-ATP + diphosphate = 5-phospho-alpha-D-ribose 1-diphosphate + ATP. It participates in amino-acid biosynthesis; L-histidine biosynthesis; L-histidine from 5-phospho-alpha-D-ribose 1-diphosphate: step 1/9. Its function is as follows. Catalyzes the condensation of ATP and 5-phosphoribose 1-diphosphate to form N'-(5'-phosphoribosyl)-ATP (PR-ATP). Has a crucial role in the pathway because the rate of histidine biosynthesis seems to be controlled primarily by regulation of HisG enzymatic activity. This is ATP phosphoribosyltransferase from Leptospira interrogans serogroup Icterohaemorrhagiae serovar Lai (strain 56601).